A 139-amino-acid polypeptide reads, in one-letter code: Small ribosomal subunit protein uS11 (139 aa).

The protein belongs to the universal ribosomal protein uS11 family. In terms of assembly, part of the 30S ribosomal subunit.

In terms of biological role, located on the platform of the 30S subunit. The sequence is that of Small ribosomal subunit protein uS11 from Pyrobaculum islandicum (strain DSM 4184 / JCM 9189 / GEO3).